A 23-amino-acid polypeptide reads, in one-letter code: Aurein-4.2 (23 aa).

This sequence belongs to the frog skin active peptide (FSAP) family. Aurein subfamily. As to expression, expressed by the skin dorsal glands.

Its subcellular location is the secreted. Functionally, has no antimicrobial or anticancer activity. The protein is Aurein-4.2 of Ranoidea aurea (Green and golden bell frog).